The primary structure comprises 1710 residues: Protein NETWORKED 1B (1710 aa).

One can recognise an NAB domain in the interval 13-92 (YSWWWDSHIP…ERYDHTTVEL (80 aa)). A disordered region spans residues 113–159 (EDSASSSSEPRTEADTEALQKDGTKSKRSFSQMNKLDGTSDSHEADS). 2 stretches are compositionally biased toward basic and acidic residues: residues 122-137 (PRTE…DGTK) and 150-159 (GTSDSHEADS). Coiled-coil stretches lie at residues 152-446 (SDSH…ELGA), 474-546 (QMLR…EIHC), 579-883 (VKKL…IDSL), 974-1021 (HQCG…FESL), 1095-1259 (VSSL…LQEK), and 1285-1336 (LILE…LSAY). The tract at residues 1409–1448 (RLSRQITRSTSQKRRDRRKIENIQPDDQVTGESRQPRLRP) is disordered. A coiled-coil region spans residues 1559–1665 (RRLSSLRISL…VLKLEDGTKS (107 aa)).

The protein belongs to the NET family. As to expression, expressed in root meristems and at very low levels throughout mature vasculature.

Plant-specific actin binding protein. May be part of a membrane-cytoskeletal adapter complex. This Arabidopsis thaliana (Mouse-ear cress) protein is Protein NETWORKED 1B.